A 639-amino-acid chain; its full sequence is Centromere protein T (639 aa).

Disordered regions lie at residues 1–64 (MDGR…RPNA), 266–294 (QLSD…GLVS), 307–451 (SEKD…ERGT), 458–477 (AAEE…ESEE), and 494–534 (QPVL…TREP). The segment covering 12 to 23 (RAAPTPRVAVRS) has biased composition (low complexity). The segment at 80–500 (IIQNQPQVSP…YRPQPVLSPP (421 aa)) is flexible stalk domain. Residues 267–281 (LSDSKTSAQRSNTSY) show a composition bias toward polar residues. 4 stretches are compositionally biased toward basic and acidic residues: residues 307–319 (SEKD…EHVD), 329–338 (QGEEEQDHSQ), 356–371 (TEHH…SEKK), and 432–449 (PGAK…EIER). The span at 458–469 (AAEEEATDDESD) shows a compositional bias: acidic residues.

It belongs to the CENP-T/CNN1 family. As to quaternary structure, component of the CENPA-CAD complex, composed of CENPI, CENPK, CENPL, CENPO, CENPP, CENPQ, CENPR and CENPS. The CENPA-CAD complex is probably recruited on centromeres by the CENPA-NAC complex, at least composed of CENPA, CENPC, CENPH, CENPM, CENPN, CENPT and CENPU. Identified in a centromeric complex containing histones H2A, H2B, H3 and H4, and at least CENPA, CENPB, CENPC, CENPT, CENPN, HJURP, SUPT16H, SSRP1 and RSF1. Interacts (via N-terminus) with the NDC80 complex. Heterodimer with CENPW; this dimer coassembles with CENPS-CENPX heterodimers at centromeres to form the tetrameric CENP-T-W-S-X complex.

Its subcellular location is the nucleus. The protein resides in the chromosome. It is found in the centromere. The protein localises to the kinetochore. Functionally, component of the CENPA-NAC (nucleosome-associated) complex, a complex that plays a central role in assembly of kinetochore proteins, mitotic progression and chromosome segregation. The CENPA-NAC complex recruits the CENPA-CAD (nucleosome distal) complex and may be involved in incorporation of newly synthesized CENPA into centromeres. Part of a nucleosome-associated complex that binds specifically to histone H3-containing nucleosomes at the centromere, as opposed to nucleosomes containing CENPA. Component of the heterotetrameric CENP-T-W-S-X complex that binds and supercoils DNA, and plays an important role in kinetochore assembly. CENPT has a fundamental role in kinetochore assembly and function. It is one of the inner kinetochore proteins, with most further proteins binding downstream. Required for normal chromosome organization and normal progress through mitosis. The sequence is that of Centromere protein T (CENPT) from Gallus gallus (Chicken).